The primary structure comprises 98 residues: Large ribosomal subunit protein eL21 (98 aa).

Positions 1-17 (MQRSRGFRSKSRRKMTK) are enriched in basic residues. Positions 1 to 28 (MQRSRGFRSKSRRKMTKVVREGRSNPIT) are disordered.

It belongs to the eukaryotic ribosomal protein eL21 family.

This Methanobrevibacter smithii (strain ATCC 35061 / DSM 861 / OCM 144 / PS) protein is Large ribosomal subunit protein eL21.